The following is a 223-amino-acid chain: Twisted gastrulation protein homolog 1 (223 aa).

An N-terminal signal peptide occupies residues 1–25 (MKLHYVAVLTLAILMFLTWLPASLS). N-linked (GlcNAc...) asparagine glycans are attached at residues N52 and N81.

Belongs to the twisted gastrulation protein family. Interacts with CHRD and BMP4. This interaction enhances CHRD/BMP4 complex formation. Interacts with BMP7.

The protein localises to the secreted. Functionally, may be involved in dorsoventral axis formation. Seems to antagonize BMP signaling by forming ternary complexes with CHRD and BMPs, thereby preventing BMPs from binding to their receptors. In addition to the anti-BMP function, also has pro-BMP activity, partly mediated by cleavage and degradation of CHRD, which releases BMPs from ternary complexes. May be an important modulator of BMP-regulated cartilage development and chondrocyte differentiation. May play a role in thymocyte development. The polypeptide is Twisted gastrulation protein homolog 1 (TWSG1) (Pongo abelii (Sumatran orangutan)).